The chain runs to 337 residues: Serpentine receptor class alpha-17 (337 aa).

6 helical membrane-spanning segments follow: residues L28 to I48, E110 to F130, I155 to V175, F197 to V217, C247 to I267, and I282 to F302.

The protein belongs to the nematode receptor-like protein sra family.

It localises to the membrane. In Caenorhabditis elegans, this protein is Serpentine receptor class alpha-17 (sra-17).